Here is a 351-residue protein sequence, read N- to C-terminus: Photosystem II D2 protein (351 aa).

A helical membrane pass occupies residues 39–59 (TSYLSIGGWFTGTTFVTSWYT). H116 serves as a coordination point for chlorophyll a. Residues 123–139 (GFCLRQFEIARLVGIRP) traverse the membrane as a helical segment. Pheophytin a contacts are provided by Q128 and N141. The helical transmembrane segment at 151–164 (IFVSVFLMYPLGQA) threads the bilayer. H196 provides a ligand contact to chlorophyll a. The chain crosses the membrane as a helical span at residues 206-226 (AALLCAIHGATVQNTIFEDGD). Residues H213 and F260 each coordinate a plastoquinone. H213 contacts Fe cation. Residue H267 participates in Fe cation binding. A helical membrane pass occupies residues 277–293 (GLWTSAIGIVGLALNLR).

Belongs to the reaction center PufL/M/PsbA/D family. As to quaternary structure, PSII is composed of 1 copy each of membrane proteins PsbA, PsbB, PsbC, PsbD, PsbE, PsbF, PsbH, PsbI, PsbJ, PsbK, PsbL, PsbM, PsbT, PsbX, PsbY, PsbZ, Psb30/Ycf12, at least 3 peripheral proteins of the oxygen-evolving complex and a large number of cofactors. It forms dimeric complexes. The cofactor is The D1/D2 heterodimer binds P680, chlorophylls that are the primary electron donor of PSII, and subsequent electron acceptors. It shares a non-heme iron and each subunit binds pheophytin, quinone, additional chlorophylls, carotenoids and lipids. There is also a Cl(-1) ion associated with D1 and D2, which is required for oxygen evolution. The PSII complex binds additional chlorophylls, carotenoids and specific lipids..

Its subcellular location is the plastid. The protein resides in the chloroplast thylakoid membrane. It catalyses the reaction 2 a plastoquinone + 4 hnu + 2 H2O = 2 a plastoquinol + O2. Its function is as follows. Photosystem II (PSII) is a light-driven water:plastoquinone oxidoreductase that uses light energy to abstract electrons from H(2)O, generating O(2) and a proton gradient subsequently used for ATP formation. It consists of a core antenna complex that captures photons, and an electron transfer chain that converts photonic excitation into a charge separation. The D1/D2 (PsbA/PsbD) reaction center heterodimer binds P680, the primary electron donor of PSII as well as several subsequent electron acceptors. D2 is needed for assembly of a stable PSII complex. The chain is Photosystem II D2 protein from Guillardia theta (Cryptophyte).